Reading from the N-terminus, the 108-residue chain is UPF0145 protein LGAS_1099 (108 aa).

It belongs to the UPF0145 family.

The sequence is that of UPF0145 protein LGAS_1099 from Lactobacillus gasseri (strain ATCC 33323 / DSM 20243 / BCRC 14619 / CIP 102991 / JCM 1131 / KCTC 3163 / NCIMB 11718 / NCTC 13722 / AM63).